Consider the following 397-residue polypeptide: MSGQVGDLSPSQEKSLAQFRENIQDVLSALPNPDDYFLLRWLQARSFDLQKSEDMLRKHMEFRKQQDLANILAWQPPEVVRLYNANGICGHDGEGSPVWYHIVGSLDPKGLLLSASKQELLRDSFRSCELLLRECELQSQKLGKRVEKIIAIFGLEGLGLRDLWKPGIELLQEFFSALEANYPEILKSLIVVRAPKLFAVAFNLVKSYMSEETRRKVVILGDNWKQELTKFISPDQLPVEFGGTMTDPDGNPKCLTKINYGGEVPKSYYLCKQVRLQYEHTRSVGRGSSLQVENEILFPGCVLRWQFASDGGDIGFGVFLKTKMGERQRAREMTEVLPSQRYNAHMVPEDGILTCLQAGSYVLRFYNTYSLVHSKRISYTVEVLLPDQTFMEKMEKF.

Residues proline 76–aspartate 249 enclose the CRAL-TRIO domain. Residues proline 252–valine 383 enclose the GOLD domain.

In Homo sapiens (Human), this protein is SEC14-like protein 6 (SEC14L6).